Here is a 274-residue protein sequence, read N- to C-terminus: Large ribosomal subunit protein uL2cz/uL2cy (274 aa).

A disordered region spans residues 224–274 (NPVDHPHGGGEGRAPIGRKKPTTPWGYPALGRRSRKRNKYSDNLILRRRSK).

The protein belongs to the universal ribosomal protein uL2 family. Part of the 50S ribosomal subunit.

The protein resides in the plastid. The protein localises to the chloroplast. This is Large ribosomal subunit protein uL2cz/uL2cy (rpl2-A) from Panax ginseng (Korean ginseng).